The chain runs to 182 residues: CDP-diacylglycerol--glycerol-3-phosphate 3-phosphatidyltransferase (182 aa).

The Cytoplasmic portion of the chain corresponds to 1-12; it reads MQLNIPTWLTLF. A helical transmembrane segment spans residues 13–37; the sequence is RVVMIPFFVLAFYLPFKWAPLCCAL. Topologically, residues 38–60 are periplasmic; that stretch reads IFVLAAVTDWFDGFLARRWKQTT. The helical transmembrane segment at 61–81 threads the bilayer; it reads RFGAFLDPVADKVMVAMALVL. The Cytoplasmic segment spans residues 82 to 86; the sequence is VAEHF. Residues 87–107 traverse the membrane as a helical segment; sequence HSWWITLPAATMIAREIIISA. Over 108–145 the chain is Periplasmic; that stretch reads LREWMAEIGKRSSVAVSWIGKVKTTAQMLALVTLLWRP. Residues 146 to 168 form a helical membrane-spanning segment; the sequence is DDIVSGIGIAALYVAAVLTFWSM. Residues 169 to 181 are Cytoplasmic-facing; that stretch reads FQYLYAARHDLFE.

This sequence belongs to the CDP-alcohol phosphatidyltransferase class-I family.

Its subcellular location is the cell inner membrane. The enzyme catalyses a CDP-1,2-diacyl-sn-glycerol + sn-glycerol 3-phosphate = a 1,2-diacyl-sn-glycero-3-phospho-(1'-sn-glycero-3'-phosphate) + CMP + H(+). It functions in the pathway phospholipid metabolism; phosphatidylglycerol biosynthesis; phosphatidylglycerol from CDP-diacylglycerol: step 1/2. Its function is as follows. Catalyzes the conversion of cytidine diphosphate diacylglycerol (CDP-DG) and glycerol 3-phosphate into phosphatidylglycerol. Essential for the synthesis of anionic phospholipids, thereby playing a role in balancing the ratio of zwitterionic and anionic phospholipids, which is thought to be important for normal membrane function. The polypeptide is CDP-diacylglycerol--glycerol-3-phosphate 3-phosphatidyltransferase (Sodalis glossinidius (strain morsitans)).